Reading from the N-terminus, the 253-residue chain is 5'/3'-nucleotidase SurE (253 aa).

D8, D9, S39, and N92 together coordinate a divalent metal cation.

The protein belongs to the SurE nucleotidase family. A divalent metal cation is required as a cofactor.

Its subcellular location is the cytoplasm. The enzyme catalyses a ribonucleoside 5'-phosphate + H2O = a ribonucleoside + phosphate. It catalyses the reaction a ribonucleoside 3'-phosphate + H2O = a ribonucleoside + phosphate. It carries out the reaction [phosphate](n) + H2O = [phosphate](n-1) + phosphate + H(+). Nucleotidase with a broad substrate specificity as it can dephosphorylate various ribo- and deoxyribonucleoside 5'-monophosphates and ribonucleoside 3'-monophosphates with highest affinity to 3'-AMP. Also hydrolyzes polyphosphate (exopolyphosphatase activity) with the preference for short-chain-length substrates (P20-25). Might be involved in the regulation of dNTP and NTP pools, and in the turnover of 3'-mononucleotides produced by numerous intracellular RNases (T1, T2, and F) during the degradation of various RNAs. This chain is 5'/3'-nucleotidase SurE, found in Klebsiella pneumoniae (strain 342).